The primary structure comprises 345 residues: Holliday junction branch migration complex subunit RuvB (345 aa).

The segment at 4-182 (PDRIVSAVQR…FGIPIRLEFY (179 aa)) is large ATPase domain (RuvB-L). ATP-binding positions include Arg22, Gly63, Lys66, Thr67, Thr68, 129-131 (EDY), Arg172, Tyr182, and Arg219. Thr67 provides a ligand contact to Mg(2+). A small ATPAse domain (RuvB-S) region spans residues 183 to 253 (TVDELQAIVT…IADAALSRLE (71 aa)). Positions 256–345 (ALGLDQLDRR…QSQINLFEEE (90 aa)) are head domain (RuvB-H). DNA contacts are provided by Arg292, Arg311, and Arg316.

It belongs to the RuvB family. In terms of assembly, homohexamer. Forms an RuvA(8)-RuvB(12)-Holliday junction (HJ) complex. HJ DNA is sandwiched between 2 RuvA tetramers; dsDNA enters through RuvA and exits via RuvB. An RuvB hexamer assembles on each DNA strand where it exits the tetramer. Each RuvB hexamer is contacted by two RuvA subunits (via domain III) on 2 adjacent RuvB subunits; this complex drives branch migration. In the full resolvosome a probable DNA-RuvA(4)-RuvB(12)-RuvC(2) complex forms which resolves the HJ.

The protein localises to the cytoplasm. It carries out the reaction ATP + H2O = ADP + phosphate + H(+). Functionally, the RuvA-RuvB-RuvC complex processes Holliday junction (HJ) DNA during genetic recombination and DNA repair, while the RuvA-RuvB complex plays an important role in the rescue of blocked DNA replication forks via replication fork reversal (RFR). RuvA specifically binds to HJ cruciform DNA, conferring on it an open structure. The RuvB hexamer acts as an ATP-dependent pump, pulling dsDNA into and through the RuvAB complex. RuvB forms 2 homohexamers on either side of HJ DNA bound by 1 or 2 RuvA tetramers; 4 subunits per hexamer contact DNA at a time. Coordinated motions by a converter formed by DNA-disengaged RuvB subunits stimulates ATP hydrolysis and nucleotide exchange. Immobilization of the converter enables RuvB to convert the ATP-contained energy into a lever motion, pulling 2 nucleotides of DNA out of the RuvA tetramer per ATP hydrolyzed, thus driving DNA branch migration. The RuvB motors rotate together with the DNA substrate, which together with the progressing nucleotide cycle form the mechanistic basis for DNA recombination by continuous HJ branch migration. Branch migration allows RuvC to scan DNA until it finds its consensus sequence, where it cleaves and resolves cruciform DNA. The chain is Holliday junction branch migration complex subunit RuvB from Chelativorans sp. (strain BNC1).